The following is a 322-amino-acid chain: tRNA U34 carboxymethyltransferase (322 aa).

Carboxy-S-adenosyl-L-methionine contacts are provided by residues Lys91, Trp105, Lys110, Gly129, 179–180 (LE), Met195, Tyr199, and Arg314.

This sequence belongs to the class I-like SAM-binding methyltransferase superfamily. CmoB family. As to quaternary structure, homotetramer.

It catalyses the reaction carboxy-S-adenosyl-L-methionine + 5-hydroxyuridine(34) in tRNA = 5-carboxymethoxyuridine(34) in tRNA + S-adenosyl-L-homocysteine + H(+). Its function is as follows. Catalyzes carboxymethyl transfer from carboxy-S-adenosyl-L-methionine (Cx-SAM) to 5-hydroxyuridine (ho5U) to form 5-carboxymethoxyuridine (cmo5U) at position 34 in tRNAs. The protein is tRNA U34 carboxymethyltransferase of Pseudomonas aeruginosa (strain LESB58).